The primary structure comprises 296 residues: NAD kinase (296 aa).

The Proton acceptor role is filled by D72. NAD(+)-binding positions include 72 to 73 (DG), 146 to 147 (ND), R157, K174, D176, 187 to 192 (TAYALS), and Q247.

This sequence belongs to the NAD kinase family. It depends on a divalent metal cation as a cofactor.

The protein resides in the cytoplasm. It catalyses the reaction NAD(+) + ATP = ADP + NADP(+) + H(+). Its function is as follows. Involved in the regulation of the intracellular balance of NAD and NADP, and is a key enzyme in the biosynthesis of NADP. Catalyzes specifically the phosphorylation on 2'-hydroxyl of the adenosine moiety of NAD to yield NADP. The sequence is that of NAD kinase from Pseudomonas savastanoi pv. phaseolicola (strain 1448A / Race 6) (Pseudomonas syringae pv. phaseolicola (strain 1448A / Race 6)).